The following is a 426-amino-acid chain: Glutamate-1-semialdehyde 2,1-aminomutase (426 aa).

An N6-(pyridoxal phosphate)lysine modification is found at Lys-265.

The protein belongs to the class-III pyridoxal-phosphate-dependent aminotransferase family. HemL subfamily. Homodimer. Pyridoxal 5'-phosphate serves as cofactor.

The protein localises to the cytoplasm. The catalysed reaction is (S)-4-amino-5-oxopentanoate = 5-aminolevulinate. It functions in the pathway porphyrin-containing compound metabolism; protoporphyrin-IX biosynthesis; 5-aminolevulinate from L-glutamyl-tRNA(Glu): step 2/2. This chain is Glutamate-1-semialdehyde 2,1-aminomutase, found in Klebsiella pneumoniae (strain 342).